Here is a 514-residue protein sequence, read N- to C-terminus: Major capsid protein L1 (514 aa).

The tract at residues 495–514 is disordered; sequence GTKTTPYRGSIRGTKRKRKN.

Belongs to the papillomaviridae L1 protein family. Self-assembles into homopentamers. The capsid has an icosahedral symmetry and consists of 72 capsomers, with each capsomer being a pentamer of L1. Interacts with the minor capsid protein L2; this interaction is necessary for viral genome encapsidation. Interacts with protein E2; this interaction enhances E2-dependent replication and transcription activation.

Its subcellular location is the virion. It is found in the host nucleus. Forms an icosahedral capsid with a T=7 symmetry and a 50 nm diameter. The capsid is composed of 72 pentamers linked to each other by disulfide bonds and associated with L2 proteins. Binds to heparan sulfate proteoglycans on cell surface of basal layer keratinocytes to provide initial virion attachment. This binding mediates a conformational change in the virus capsid that facilitates efficient infection. The virion enters the host cell via endocytosis. During virus trafficking, L1 protein dissociates from the viral DNA and the genomic DNA is released to the host nucleus. The virion assembly takes place within the cell nucleus. Encapsulates the genomic DNA together with protein L2. This Human papillomavirus 47 protein is Major capsid protein L1.